We begin with the raw amino-acid sequence, 246 residues long: Polyhedrin (246 aa).

This sequence belongs to the polyhedrin family.

In terms of biological role, major component of the virus occlusion bodies, which are large proteinaceous structures (polyhedra), that protect the virus from the outside environment for extended periods until they are ingested by insect larvae. This chain is Polyhedrin (PH), found in Lepidoptera (butterflies and moths).